Here is a 773-residue protein sequence, read N- to C-terminus: Serine/threonine-protein kinase CBK1 (773 aa).

Composition is skewed to polar residues over residues 50 to 59 (LHDQYSSHME) and 178 to 217 (GNYN…SPQR). Disordered stretches follow at residues 50–111 (LHDQ…GGNI) and 177–275 (NGNY…QQQQ). Composition is skewed to low complexity over residues 218 to 256 (QPAQ…QQQP) and 265 to 275 (QQTQLQQQQQQ). A Protein kinase domain is found at 370-686 (FHTVQVIGKG…ADEIKSHPFF (317 aa)). ATP is bound by residues 376–384 (IGKGAFGEV) and Lys399. The Proton acceptor role is filled by Asp493. In terms of domain architecture, AGC-kinase C-terminal spans 687–771 (RGVDWNTIRQ…SRFDYLTRKN (85 aa)).

The protein belongs to the protein kinase superfamily. STE Ser/Thr protein kinase family. COT1 subfamily.

The catalysed reaction is L-seryl-[protein] + ATP = O-phospho-L-seryl-[protein] + ADP + H(+). It carries out the reaction L-threonyl-[protein] + ATP = O-phospho-L-threonyl-[protein] + ADP + H(+). Functionally, protein kinase that seems to play a role in the regulation of cell morphogenesis and proliferation. The chain is Serine/threonine-protein kinase CBK1 (CBK1) from Candida glabrata (strain ATCC 2001 / BCRC 20586 / JCM 3761 / NBRC 0622 / NRRL Y-65 / CBS 138) (Yeast).